A 135-amino-acid chain; its full sequence is Large ribosomal subunit protein eL27y (135 aa).

This sequence belongs to the eukaryotic ribosomal protein eL27 family.

The polypeptide is Large ribosomal subunit protein eL27y (RPL27B) (Arabidopsis thaliana (Mouse-ear cress)).